We begin with the raw amino-acid sequence, 454 residues long: Pup--protein ligase (454 aa).

Glu-9 lines the Mg(2+) pocket. Arg-53 is a binding site for ATP. Tyr-55 contacts Mg(2+). Asp-57 (proton acceptor) is an active-site residue. Glu-63 is a Mg(2+) binding site. ATP is bound by residues Thr-66 and Trp-420.

Belongs to the Pup ligase/Pup deamidase family. Pup-conjugating enzyme subfamily.

It catalyses the reaction ATP + [prokaryotic ubiquitin-like protein]-L-glutamate + [protein]-L-lysine = ADP + phosphate + N(6)-([prokaryotic ubiquitin-like protein]-gamma-L-glutamyl)-[protein]-L-lysine.. The protein operates within protein degradation; proteasomal Pup-dependent pathway. It participates in protein modification; protein pupylation. Its function is as follows. Catalyzes the covalent attachment of the prokaryotic ubiquitin-like protein modifier Pup to the proteasomal substrate proteins, thereby targeting them for proteasomal degradation. This tagging system is termed pupylation. The ligation reaction involves the side-chain carboxylate of the C-terminal glutamate of Pup and the side-chain amino group of a substrate lysine. The protein is Pup--protein ligase of Paenarthrobacter aurescens (strain TC1).